The following is a 415-amino-acid chain: Putative O-antigen transporter (415 aa).

Over 1–11 the chain is Cytoplasmic; it reads MNTNKLSLRRN. The chain crosses the membrane as a helical span at residues 12–32; that stretch reads VIYLAVVQGSNYLLPLLTFPY. At 33 to 41 the chain is on the periplasmic side; sequence LVRTLGPEN. Residues 42 to 62 form a helical membrane-spanning segment; sequence FGIFGFCQATMLYMIMFVEYG. At 63-83 the chain is on the cytoplasmic side; it reads FNLTATQSIAKAADSKDKVTS. Residues 84-104 form a helical membrane-spanning segment; the sequence is IFWAVIFSKIVLIVITLIFLT. The Periplasmic segment spans residues 105–117; the sequence is SMTLLVPEYNKHA. A helical membrane pass occupies residues 118–138; sequence VIIWSFVPALVGNLIYPIWLF. Residues 139 to 173 lie on the Cytoplasmic side of the membrane; the sequence is QGKEKMKWLTLSSILSRLAIIPLTFIFVNTKSDIA. A helical transmembrane segment spans residues 174–194; that stretch reads IAGFIQSSANLVAGIIALAIV. Topologically, residues 195–220 are periplasmic; it reads VHEGWIGKVTLSLHNVRRSLADGFHV. Residues 221–241 traverse the membrane as a helical segment; sequence FISTSAISLYSTGIVIILGFI. Over 242–295 the chain is Cytoplasmic; that stretch reads SGPTSVGNFNAANTIRNALQGLLNPITQAIYPRISSTLVLNRVKGVILIKKSLT. A helical membrane pass occupies residues 296 to 316; that stretch reads CLSLIGGAFSLILLLGASILV. Over 317–328 the chain is Periplasmic; sequence KISIGPGYDNAV. Residues 329 to 349 form a helical membrane-spanning segment; the sequence is IVLMIISPLPFLISLSNVYGI. Topologically, residues 350–362 are cytoplasmic; it reads QVMLTHNYKKEFS. The chain crosses the membrane as a helical span at residues 363-383; the sequence is KILIAAGLLSLLLIFPLTTLF. The Periplasmic portion of the chain corresponds to 384-385; the sequence is KE. Residues 386-406 form a helical membrane-spanning segment; the sequence is IGAAITLLATECLVTSLMLMF. Residues 407-415 lie on the Cytoplasmic side of the membrane; sequence VRNNKLLVC.

This sequence belongs to the polysaccharide synthase family.

The protein resides in the cell inner membrane. Its pathway is bacterial outer membrane biogenesis; LPS O-antigen biosynthesis. Functionally, may be involved in the translocation process of the nascent O-polysaccharide molecules and/or its ligation to lipid A core units. This is Putative O-antigen transporter (rfbX) from Escherichia coli (strain K12).